Consider the following 203-residue polypeptide: dITP/XTP pyrophosphatase (203 aa).

8 to 13 (SNNAGK) is a substrate binding site. Positions 40 and 69 each coordinate Mg(2+). Asp-69 acts as the Proton acceptor in catalysis. Substrate is bound by residues Ser-70, 152–155 (FGYD), Lys-175, and 180–181 (HR).

Belongs to the HAM1 NTPase family. As to quaternary structure, homodimer. Mg(2+) serves as cofactor.

It catalyses the reaction XTP + H2O = XMP + diphosphate + H(+). The enzyme catalyses dITP + H2O = dIMP + diphosphate + H(+). It carries out the reaction ITP + H2O = IMP + diphosphate + H(+). Functionally, pyrophosphatase that catalyzes the hydrolysis of nucleoside triphosphates to their monophosphate derivatives, with a high preference for the non-canonical purine nucleotides XTP (xanthosine triphosphate), dITP (deoxyinosine triphosphate) and ITP. Seems to function as a house-cleaning enzyme that removes non-canonical purine nucleotides from the nucleotide pool, thus preventing their incorporation into DNA/RNA and avoiding chromosomal lesions. The polypeptide is dITP/XTP pyrophosphatase (Nitrosomonas europaea (strain ATCC 19718 / CIP 103999 / KCTC 2705 / NBRC 14298)).